The following is an 89-amino-acid chain: Arminin 375 (89 aa).

The signal sequence occupies residues 1 to 18; that stretch reads MKAVFAILFLAFIALTYA. A propeptide spanning residues 19-57 is cleaved from the precursor; that stretch reads KSYDEVKEEIKNEVEREIFEDLEEESDELDNYVEESNDA. Residue Ala-86 is modified to Alanine amide.

Belongs to the arminin family. Expressed in entodermal epithelium along the body column.

It is found in the secreted. It localises to the target cell membrane. Antimicrobial peptide with a broad-spectrum antimicrobial activity. Keeps its antibacterial activity under a wide range of salt concentrations that mimic physiological conditions of human blood, which is surprising, since Hydra is an obligate freshwater animal with nearly no salt tolerance. Does not affect red blood cells. In Hydra oligactis (Brown hydra), this protein is Arminin 375.